Reading from the N-terminus, the 321-residue chain is Translation initiation factor eIF2B subunit alpha (321 aa).

It belongs to the eIF-2B alpha/beta/delta subunits family. As to quaternary structure, component of the translation initiation factor 2B (eIF2B) complex which is a heterodecamer of two sets of five different subunits: alpha, beta, gamma, delta and epsilon. Subunits alpha, beta and delta comprise a regulatory subcomplex and subunits epsilon and gamma comprise a catalytic subcomplex. Within the complex, the hexameric regulatory complex resides at the center, with the two heterodimeric catalytic subcomplexes bound on opposite sides.

It localises to the cytoplasm. The protein localises to the cytosol. Functionally, acts as a component of the translation initiation factor 2B (eIF2B) complex, which catalyzes the exchange of GDP for GTP on eukaryotic initiation factor 2 (eIF2) gamma subunit. Its guanine nucleotide exchange factor activity is repressed when bound to eIF2 complex phosphorylated on the alpha subunit, thereby limiting the amount of methionyl-initiator methionine tRNA available to the ribosome and consequently global translation is repressed. This Dictyostelium discoideum (Social amoeba) protein is Translation initiation factor eIF2B subunit alpha (eif2b1).